Here is a 123-residue protein sequence, read N- to C-terminus: MAALGTVLFTGVRRLHCSVAAWAGGQWRLQQGLAANPSGYGPLTELPDWSYADGRPAPPMKGQLRRKAERETFARRVVLLSQEMDAGLQAWQLRQQKLQEEQRKQENALKPKGASLKSPLPSQ.

The transit peptide at 1–23 (MAALGTVLFTGVRRLHCSVAAWA) directs the protein to the mitochondrion. The span at 99–109 (QEEQRKQENAL) shows a compositional bias: basic and acidic residues. The disordered stretch occupies residues 99–123 (QEEQRKQENALKPKGASLKSPLPSQ).

It belongs to the mitochondrion-specific ribosomal protein mL52 family. Component of the mitochondrial large ribosomal subunit (mt-LSU). Mature mammalian 55S mitochondrial ribosomes consist of a small (28S) and a large (39S) subunit. The 28S small subunit contains a 12S ribosomal RNA (12S mt-rRNA) and 30 different proteins. The 39S large subunit contains a 16S rRNA (16S mt-rRNA), a copy of mitochondrial valine transfer RNA (mt-tRNA(Val)), which plays an integral structural role, and 52 different proteins. mL52 connects the central protuberance to the body of the ribosome.

The protein resides in the mitochondrion. The protein is Large ribosomal subunit protein mL52 (MRPL52) of Homo sapiens (Human).